The sequence spans 448 residues: Tapasin (448 aa).

An N-terminal signal peptide occupies residues 1 to 20 (MKSLSLLLAVALGLATAVSA). Residues 21–414 (GPAVIECWFV…LSGPSLEDSI (394 aa)) are Lumenal-facing. A disulfide bridge connects residues C27 and C91. N253 carries an N-linked (GlcNAc...) asparagine glycan. The region spanning 292 to 399 (PKVSLMPATL…PASGRSAEVT (108 aa)) is the Ig-like C1-type domain. C315 and C382 are oxidised to a cystine. A helical transmembrane segment spans residues 415–435 (GLFLSAFFLLGLFKALGWAAV). Topologically, residues 436–448 (YLSTCKDSKKKAE) are cytoplasmic.

Heterodimer with PDIA3; disulfide-linked. Obligatory mediator for the interaction between newly assembled MHC class I molecules, calreticulin, PDIA3 and TAP. Up to 4 MHC class I/tapasin complexes bind to 1 TAP. Interacts with HLA-G-B2M complex; this interaction is required for loading of high affinity peptides. On its own or as part of MHC class I peptide loading complex, interacts with ligand-free MR1 or MR1-B2M complex, providing for stable MR1 pools ready for metabolite antigen processing.

It is found in the endoplasmic reticulum membrane. Involved in the association of MHC class I with transporter associated with antigen processing (TAP) and in the assembly of MHC class I with peptide (peptide loading). This chain is Tapasin (TAPBP), found in Chlorocebus aethiops (Green monkey).